We begin with the raw amino-acid sequence, 559 residues long: CTP synthase (559 aa).

An amidoligase domain region spans residues 1-270; sequence MTKFVFVTGG…DGLICDKLRL (270 aa). Residue serine 13 coordinates CTP. Position 13 (serine 13) interacts with UTP. ATP-binding positions include 14-19 and aspartate 71; that span reads SLGKGI. 2 residues coordinate Mg(2+): aspartate 71 and glutamate 144. Residues 151 to 153, 191 to 196, and lysine 227 contribute to the CTP site; these read DIE and KTKPTQ. UTP is bound by residues 191–196 and lysine 227; that span reads KTKPTQ. Residues 295–548 enclose the Glutamine amidotransferase type-1 domain; the sequence is TIAMVGKYVD…IKAAIDHQKS (254 aa). Glycine 357 serves as a coordination point for L-glutamine. Cysteine 384 (nucleophile; for glutamine hydrolysis) is an active-site residue. Residues 385-388, glutamate 408, and arginine 474 contribute to the L-glutamine site; that span reads LGMQ. Residues histidine 521 and glutamate 523 contribute to the active site.

The protein belongs to the CTP synthase family. Homotetramer.

It carries out the reaction UTP + L-glutamine + ATP + H2O = CTP + L-glutamate + ADP + phosphate + 2 H(+). The enzyme catalyses L-glutamine + H2O = L-glutamate + NH4(+). It catalyses the reaction UTP + NH4(+) + ATP = CTP + ADP + phosphate + 2 H(+). The protein operates within pyrimidine metabolism; CTP biosynthesis via de novo pathway; CTP from UDP: step 2/2. With respect to regulation, allosterically activated by GTP, when glutamine is the substrate; GTP has no effect on the reaction when ammonia is the substrate. The allosteric effector GTP functions by stabilizing the protein conformation that binds the tetrahedral intermediate(s) formed during glutamine hydrolysis. Inhibited by the product CTP, via allosteric rather than competitive inhibition. Functionally, catalyzes the ATP-dependent amination of UTP to CTP with either L-glutamine or ammonia as the source of nitrogen. Regulates intracellular CTP levels through interactions with the four ribonucleotide triphosphates. In Paracidovorax citrulli (strain AAC00-1) (Acidovorax citrulli), this protein is CTP synthase.